The chain runs to 166 residues: 2-C-methyl-D-erythritol 2,4-cyclodiphosphate synthase (166 aa).

A divalent metal cation-binding residues include D11 and H13. 4-CDP-2-C-methyl-D-erythritol 2-phosphate-binding positions include D11 to H13 and H40 to S41. H48 contacts a divalent metal cation. 4-CDP-2-C-methyl-D-erythritol 2-phosphate contacts are provided by residues D62–G64, T135–D138, F142, and R145.

This sequence belongs to the IspF family. Homotrimer. It depends on a divalent metal cation as a cofactor.

It carries out the reaction 4-CDP-2-C-methyl-D-erythritol 2-phosphate = 2-C-methyl-D-erythritol 2,4-cyclic diphosphate + CMP. The protein operates within isoprenoid biosynthesis; isopentenyl diphosphate biosynthesis via DXP pathway; isopentenyl diphosphate from 1-deoxy-D-xylulose 5-phosphate: step 4/6. Involved in the biosynthesis of isopentenyl diphosphate (IPP) and dimethylallyl diphosphate (DMAPP), two major building blocks of isoprenoid compounds. Catalyzes the conversion of 4-diphosphocytidyl-2-C-methyl-D-erythritol 2-phosphate (CDP-ME2P) to 2-C-methyl-D-erythritol 2,4-cyclodiphosphate (ME-CPP) with a corresponding release of cytidine 5-monophosphate (CMP). This is 2-C-methyl-D-erythritol 2,4-cyclodiphosphate synthase from Pseudarthrobacter chlorophenolicus (strain ATCC 700700 / DSM 12829 / CIP 107037 / JCM 12360 / KCTC 9906 / NCIMB 13794 / A6) (Arthrobacter chlorophenolicus).